Here is a 299-residue protein sequence, read N- to C-terminus: Acetylglutamate kinase (299 aa).

Substrate contacts are provided by residues 72 to 73 (GG), R94, and N196.

The protein belongs to the acetylglutamate kinase family. ArgB subfamily.

It is found in the cytoplasm. It carries out the reaction N-acetyl-L-glutamate + ATP = N-acetyl-L-glutamyl 5-phosphate + ADP. It participates in amino-acid biosynthesis; L-arginine biosynthesis; N(2)-acetyl-L-ornithine from L-glutamate: step 2/4. Catalyzes the ATP-dependent phosphorylation of N-acetyl-L-glutamate. This is Acetylglutamate kinase from Burkholderia cenocepacia (strain HI2424).